A 228-amino-acid polypeptide reads, in one-letter code: Orotidine 5'-phosphate decarboxylase (228 aa).

Substrate-binding positions include D8, K30, D59–T68, T118, R178, Q187, G207, and R208. The active-site Proton donor is K61.

This sequence belongs to the OMP decarboxylase family. Type 1 subfamily. In terms of assembly, homodimer.

It carries out the reaction orotidine 5'-phosphate + H(+) = UMP + CO2. It participates in pyrimidine metabolism; UMP biosynthesis via de novo pathway; UMP from orotate: step 2/2. Functionally, catalyzes the decarboxylation of orotidine 5'-monophosphate (OMP) to uridine 5'-monophosphate (UMP). This is Orotidine 5'-phosphate decarboxylase from Wolinella succinogenes (strain ATCC 29543 / DSM 1740 / CCUG 13145 / JCM 31913 / LMG 7466 / NCTC 11488 / FDC 602W) (Vibrio succinogenes).